A 71-amino-acid polypeptide reads, in one-letter code: Delta-actitoxin-Avd2b 4 (71 aa).

The first 20 residues, 1-20 (MMNRLLVFLMLGAFMLVVSA), serve as a signal peptide directing secretion. Positions 21–41 (NDAYGDEPAFKDLNQGDESLG) are excised as a propeptide. 3 disulfide bridges follow: C46–C61, C47–C55, and C49–C66.

It belongs to the sea anemone short toxin (type III) family.

The protein localises to the secreted. Its subcellular location is the nematocyst. Functionally, voltage-gated sodium channel (Nav) inhibitor. 1 uM completely inhibits insect voltage-gated sodium channel inactivation (DmNav1 from D.melanogaster). In Anemonia viridis (Snakelocks anemone), this protein is Delta-actitoxin-Avd2b 4.